The chain runs to 117 residues: Photosystem II reaction center Psb28 protein (117 aa).

The protein belongs to the Psb28 family. Part of the photosystem II complex.

Its subcellular location is the cellular thylakoid membrane. The chain is Photosystem II reaction center Psb28 protein from Prochlorococcus marinus (strain AS9601).